The primary structure comprises 129 residues: Glycine cleavage system H protein (129 aa).

Positions I24–R106 constitute a Lipoyl-binding domain. An N6-lipoyllysine modification is found at K65.

The protein belongs to the GcvH family. The glycine cleavage system is composed of four proteins: P, T, L and H. It depends on (R)-lipoate as a cofactor.

The glycine cleavage system catalyzes the degradation of glycine. The H protein shuttles the methylamine group of glycine from the P protein to the T protein. The chain is Glycine cleavage system H protein from Cyanothece sp. (strain PCC 7425 / ATCC 29141).